The primary structure comprises 830 residues: Protein translocase subunit SecA (830 aa).

ATP is bound by residues glutamine 86, 104-108, and aspartate 491; that span reads GEGKT. The Zn(2+) site is built by cysteine 813, cysteine 815, cysteine 824, and cysteine 825.

The protein belongs to the SecA family. As to quaternary structure, monomer and homodimer. Part of the essential Sec protein translocation apparatus which comprises SecA, SecYEG and auxiliary proteins SecDF. Other proteins may also be involved. Zn(2+) is required as a cofactor.

It localises to the cell membrane. The protein resides in the cytoplasm. It carries out the reaction ATP + H2O + cellular proteinSide 1 = ADP + phosphate + cellular proteinSide 2.. In terms of biological role, part of the Sec protein translocase complex. Interacts with the SecYEG preprotein conducting channel. Has a central role in coupling the hydrolysis of ATP to the transfer of proteins into and across the cell membrane, serving as an ATP-driven molecular motor driving the stepwise translocation of polypeptide chains across the membrane. The protein is Protein translocase subunit SecA of Syntrophomonas wolfei subsp. wolfei (strain DSM 2245B / Goettingen).